The primary structure comprises 391 residues: Putative 12-oxophytodienoate reductase 6 (391 aa).

Residues 42-44, Ala-75, and Gln-117 each bind FMN; that span reads PMT. 189–192 serves as a coordination point for substrate; the sequence is HGAN. The Proton donor role is filled by Tyr-194. Residue Arg-241 participates in FMN binding. Substrate is bound at residue Arg-282. FMN contacts are provided by residues Gly-312 and 333–334; that span reads GR. Residues 372–391 form a disordered region; that stretch reads YPFLDEHHHDDDDDSNAPSA. Residues 382–391 are compositionally biased toward acidic residues; that stretch reads DDDDSNAPSA.

This sequence belongs to the NADH:flavin oxidoreductase/NADH oxidase family. It depends on FMN as a cofactor.

Its function is as follows. Putative oxophytodienoate reductase that may be involved in the biosynthesis or metabolism of oxylipin signaling molecules. In Oryza sativa subsp. japonica (Rice), this protein is Putative 12-oxophytodienoate reductase 6 (OPR6).